The following is a 176-amino-acid chain: Putative Ras-related protein RABA4e (176 aa).

The protein belongs to the small GTPase superfamily. Rab family.

The sequence is that of Putative Ras-related protein RABA4e (RABA4E) from Arabidopsis thaliana (Mouse-ear cress).